The sequence spans 353 residues: Heat-inducible transcription repressor HrcA (353 aa).

This sequence belongs to the HrcA family.

Its function is as follows. Negative regulator of class I heat shock genes (grpE-dnaK-dnaJ and groELS operons). Prevents heat-shock induction of these operons. The polypeptide is Heat-inducible transcription repressor HrcA (Synechococcus elongatus (strain ATCC 33912 / PCC 7942 / FACHB-805) (Anacystis nidulans R2)).